The chain runs to 216 residues: Thylakoid lumenal 16.5 kDa protein, chloroplastic (216 aa).

A chloroplast-targeting transit peptide spans 1–38 (MAKSLLCSSTLNPFFSTTLSSSKKNQIAYSGNSKNQTS). Residues 39-73 (SSLLWKRRELSLGFMSSLVAIGLVSNDRRRHDANA) constitute a thylakoid transit peptide.

The protein resides in the plastid. The protein localises to the chloroplast thylakoid lumen. The protein is Thylakoid lumenal 16.5 kDa protein, chloroplastic of Arabidopsis thaliana (Mouse-ear cress).